Reading from the N-terminus, the 454-residue chain is DNA-binding protein (454 aa).

The disordered stretch occupies residues 1–41 (MSHKKVVAISESSSDEEVPVAPPTAPPKKRQRKAVEEPRGH). A Phosphotyrosine; by host modification is found at Tyr-129. Cys-213 and His-215 together coordinate Zn(2+). Residues 226 to 260 (VEMDVNSENAQRALKENPEKTKIVSNRWGRNVVQF) form a flexible loop region. Positions 268, 284, 325, 327, 378, and 394 each coordinate Zn(2+). Residues 440-454 (TILPQGQHDDDLVLF) form a C-terminal arm, DBP binding region.

It belongs to the adenoviridae E2A DNA-binding protein family. As to quaternary structure, homomultimerizes on viral ssDNA bound to pTP. Forms a initiation complex with viral polymerase, pTP and hosts NFIA and POU2F1/OCT1. Interacts with host SRCAP.

The protein resides in the host nucleus. In terms of biological role, plays a role in the elongation phase of viral strand displacement replication by unwinding the template in an ATP-independent fashion, employing its capacity to form multimers. Also enhances the rate of initiation. Released from template upon second strand synthesis. Assembles in complex with viral pTP, viral pol, host NFIA and host POU2F1/OCT1 on viral origin of replication. Covers the whole ssDNA genome during synthesis. The complementary strand synthesis induces its relese from DNA template. May inhibit cellular transcription mediated by the interaction between host SRCAP and CBP. The sequence is that of DNA-binding protein from Canine adenovirus serotype 1 (strain RI261) (CAdV-1).